The following is a 217-amino-acid chain: MNIDQSKIPQATAKRLPLYYRFLKNLHASGKQRVSSAELSDAVKVDSATIRRDFSYFGALGKKGYGYNVDYLLTFFRKTLDQDEMTNVMLIGVGNLGTAFLHYNFIKNNNTKISMAFDVNESKIGSEIGGVPVYDLDKLEEHVQEVGDIPVAILTVPAVAAQPITDRLIALGIKGILNFTPARLNVPEHIRIHHIDLAVELQSLVYFLKHYSITQED.

The H-T-H motif DNA-binding region spans 18–57 (LYYRFLKNLHASGKQRVSSAELSDAVKVDSATIRRDFSYF). 92-97 (GVGNLG) lines the NAD(+) pocket.

The protein belongs to the transcriptional regulatory Rex family. In terms of assembly, homodimer.

It is found in the cytoplasm. Functionally, modulates transcription in response to changes in cellular NADH/NAD(+) redox state. The sequence is that of Redox-sensing transcriptional repressor Rex from Bacillus pumilus (strain SAFR-032).